We begin with the raw amino-acid sequence, 369 residues long: Deoxyhypusine synthase (369 aa).

Residues 105–109, 131–133, glutamate 137, and aspartate 238 each bind NAD(+); these read SNLIS and TAG. Residue 136–137 participates in spermidine binding; the sequence is EE. Aspartate 243 contacts spermidine. Position 283 (glycine 283) interacts with NAD(+). Histidine 288 serves as a coordination point for spermidine. 308-309 serves as a coordination point for NAD(+); it reads TA. Spermidine-binding positions include 314 to 316 and 323 to 329; these read GSD and EAVSWGK. Residue lysine 329 is the Nucleophile of the active site. 342 to 343 lines the NAD(+) pocket; it reads DA.

The protein belongs to the deoxyhypusine synthase family. NAD(+) is required as a cofactor.

It catalyses the reaction [eIF5A protein]-L-lysine + spermidine = [eIF5A protein]-deoxyhypusine + propane-1,3-diamine. Its pathway is protein modification; eIF5A hypusination. In terms of biological role, catalyzes the NAD-dependent oxidative cleavage of spermidine and the subsequent transfer of the butylamine moiety of spermidine to the epsilon-amino group of a critical lysine residue of the eIF-5A precursor protein to form the intermediate deoxyhypusine residue. This is the first step of the post-translational modification of that lysine into an unusual amino acid residue named hypusine. Hypusination is unique to mature eIF-5A factor and is essential for its function. This Rattus norvegicus (Rat) protein is Deoxyhypusine synthase (Dhps).